The following is a 378-amino-acid chain: tRNA (guanine(26)-N(2))-dimethyltransferase (378 aa).

A Trm1 methyltransferase domain is found at 4-374 (KEVTEGKVRI…KGYEEIIRCV (371 aa)). The S-adenosyl-L-methionine site is built by arginine 44, arginine 69, aspartate 87, aspartate 114, and alanine 115. Residues cysteine 246, cysteine 249, cysteine 263, and cysteine 266 each contribute to the Zn(2+) site.

Belongs to the class I-like SAM-binding methyltransferase superfamily. Trm1 family.

The enzyme catalyses guanosine(26) in tRNA + 2 S-adenosyl-L-methionine = N(2)-dimethylguanosine(26) in tRNA + 2 S-adenosyl-L-homocysteine + 2 H(+). Functionally, dimethylates a single guanine residue at position 26 of a number of tRNAs using S-adenosyl-L-methionine as donor of the methyl groups. In Saccharolobus islandicus (strain M.16.27) (Sulfolobus islandicus), this protein is tRNA (guanine(26)-N(2))-dimethyltransferase.